Consider the following 514-residue polypeptide: 2-isopropylmalate synthase (514 aa).

The Pyruvate carboxyltransferase domain occupies 8-270 (IRIFDTTLRD…DCGVVTEQLF (263 aa)). Mn(2+) contacts are provided by aspartate 17, histidine 205, histidine 207, and asparagine 241. Positions 394–514 (RLVNLSVQCS…KEEEQEKEGI (121 aa)) are regulatory domain.

Belongs to the alpha-IPM synthase/homocitrate synthase family. LeuA type 1 subfamily. As to quaternary structure, homodimer. It depends on Mn(2+) as a cofactor.

It is found in the cytoplasm. The catalysed reaction is 3-methyl-2-oxobutanoate + acetyl-CoA + H2O = (2S)-2-isopropylmalate + CoA + H(+). The protein operates within amino-acid biosynthesis; L-leucine biosynthesis; L-leucine from 3-methyl-2-oxobutanoate: step 1/4. Its function is as follows. Catalyzes the condensation of the acetyl group of acetyl-CoA with 3-methyl-2-oxobutanoate (2-ketoisovalerate) to form 3-carboxy-3-hydroxy-4-methylpentanoate (2-isopropylmalate). The protein is 2-isopropylmalate synthase of Nitratidesulfovibrio vulgaris (strain DSM 19637 / Miyazaki F) (Desulfovibrio vulgaris).